A 208-amino-acid chain; its full sequence is Floral homeotic protein PISTILLATA (208 aa).

In terms of domain architecture, MADS-box spans R3–Y57. A coiled-coil region spans residues S75–N117. One can recognise a K-box domain in the interval H84–A170.

Forms a heterodimer with APETALA3, capable of binding to CArG-box sequences. AP3/PI heterodimer binds AP1 or SEP3 to form a ternary complex.

Its subcellular location is the nucleus. Its function is as follows. Probable transcription factor involved in the genetic control of flower development. Is required for normal development of petals and stamens in the wild-type flower. Forms a heterodimer with APETALA3 that is required for autoregulation of both AP3 and PI genes. AP3/PI heterodimer interacts with APETALA1 or SEPALLATA3 to form a ternary complex that could be responsible for the regulation of the genes involved in the flower development. AP3/PI heterodimer activates the expression of NAP. AP3/PI prevents GATA22/GNL and GATA21/GNC expression. This chain is Floral homeotic protein PISTILLATA (PI), found in Arabidopsis thaliana (Mouse-ear cress).